A 294-amino-acid polypeptide reads, in one-letter code: UDP-3-O-acyl-N-acetylglucosamine deacetylase (294 aa).

The Zn(2+) site is built by H75, H232, and D236. H259 (proton donor) is an active-site residue.

Belongs to the LpxC family. Zn(2+) is required as a cofactor.

It carries out the reaction a UDP-3-O-[(3R)-3-hydroxyacyl]-N-acetyl-alpha-D-glucosamine + H2O = a UDP-3-O-[(3R)-3-hydroxyacyl]-alpha-D-glucosamine + acetate. It functions in the pathway glycolipid biosynthesis; lipid IV(A) biosynthesis; lipid IV(A) from (3R)-3-hydroxytetradecanoyl-[acyl-carrier-protein] and UDP-N-acetyl-alpha-D-glucosamine: step 2/6. In terms of biological role, catalyzes the hydrolysis of UDP-3-O-myristoyl-N-acetylglucosamine to form UDP-3-O-myristoylglucosamine and acetate, the committed step in lipid A biosynthesis. The polypeptide is UDP-3-O-acyl-N-acetylglucosamine deacetylase (Campylobacter jejuni subsp. doylei (strain ATCC BAA-1458 / RM4099 / 269.97)).